Reading from the N-terminus, the 628-residue chain is Carbon monoxide dehydrogenase 1 (628 aa).

[4Fe-4S] cluster-binding residues include cysteine 44, cysteine 52, cysteine 53, cysteine 56, cysteine 61, and cysteine 75. Positions 266, 302, 340, 448, 478, and 519 each coordinate [Ni-4Fe-5S] cluster.

This sequence belongs to the Ni-containing carbon monoxide dehydrogenase family. As to quaternary structure, homodimer. [4Fe-4S] cluster is required as a cofactor. [Ni-4Fe-5S] cluster serves as cofactor.

The catalysed reaction is CO + 2 oxidized [2Fe-2S]-[ferredoxin] + H2O = 2 reduced [2Fe-2S]-[ferredoxin] + CO2 + 2 H(+). Functionally, CODH oxidizes carbon monoxide coupled, via CooF, to the reduction of a hydrogen cation by a hydrogenase (possibly CooH). The polypeptide is Carbon monoxide dehydrogenase 1 (cooS1) (Methanosarcina acetivorans (strain ATCC 35395 / DSM 2834 / JCM 12185 / C2A)).